Consider the following 50-residue polypeptide: Large ribosomal subunit protein eL39 (50 aa).

Belongs to the eukaryotic ribosomal protein eL39 family.

The polypeptide is Large ribosomal subunit protein eL39 (rpl39e) (Archaeoglobus fulgidus (strain ATCC 49558 / DSM 4304 / JCM 9628 / NBRC 100126 / VC-16)).